A 186-amino-acid chain; its full sequence is Elongation factor P (186 aa).

It belongs to the elongation factor P family.

The protein localises to the cytoplasm. It participates in protein biosynthesis; polypeptide chain elongation. Functionally, involved in peptide bond synthesis. Stimulates efficient translation and peptide-bond synthesis on native or reconstituted 70S ribosomes in vitro. Probably functions indirectly by altering the affinity of the ribosome for aminoacyl-tRNA, thus increasing their reactivity as acceptors for peptidyl transferase. In Shewanella piezotolerans (strain WP3 / JCM 13877), this protein is Elongation factor P.